The chain runs to 169 residues: Large ribosomal subunit protein uL10 (169 aa).

This sequence belongs to the universal ribosomal protein uL10 family. As to quaternary structure, part of the ribosomal stalk of the 50S ribosomal subunit. The N-terminus interacts with L11 and the large rRNA to form the base of the stalk. The C-terminus forms an elongated spine to which L12 dimers bind in a sequential fashion forming a multimeric L10(L12)X complex.

Forms part of the ribosomal stalk, playing a central role in the interaction of the ribosome with GTP-bound translation factors. This chain is Large ribosomal subunit protein uL10, found in Staphylococcus saprophyticus subsp. saprophyticus (strain ATCC 15305 / DSM 20229 / NCIMB 8711 / NCTC 7292 / S-41).